The following is a 279-amino-acid chain: 2-dehydro-3-deoxyphosphooctonate aldolase (279 aa).

It belongs to the KdsA family.

It is found in the cytoplasm. The enzyme catalyses D-arabinose 5-phosphate + phosphoenolpyruvate + H2O = 3-deoxy-alpha-D-manno-2-octulosonate-8-phosphate + phosphate. Its pathway is carbohydrate biosynthesis; 3-deoxy-D-manno-octulosonate biosynthesis; 3-deoxy-D-manno-octulosonate from D-ribulose 5-phosphate: step 2/3. It participates in bacterial outer membrane biogenesis; lipopolysaccharide biosynthesis. The chain is 2-dehydro-3-deoxyphosphooctonate aldolase from Aromatoleum aromaticum (strain DSM 19018 / LMG 30748 / EbN1) (Azoarcus sp. (strain EbN1)).